The primary structure comprises 210 residues: Protein-L-isoaspartate O-methyltransferase (210 aa).

Ser-60 is an active-site residue.

Belongs to the methyltransferase superfamily. L-isoaspartyl/D-aspartyl protein methyltransferase family.

Its subcellular location is the cytoplasm. It catalyses the reaction [protein]-L-isoaspartate + S-adenosyl-L-methionine = [protein]-L-isoaspartate alpha-methyl ester + S-adenosyl-L-homocysteine. Functionally, catalyzes the methyl esterification of L-isoaspartyl residues in peptides and proteins that result from spontaneous decomposition of normal L-aspartyl and L-asparaginyl residues. It plays a role in the repair and/or degradation of damaged proteins. This is Protein-L-isoaspartate O-methyltransferase from Xylella fastidiosa (strain M12).